Here is a 394-residue protein sequence, read N- to C-terminus: Probable tRNA sulfurtransferase (394 aa).

A THUMP domain is found at 61–168 (DETVATLSRI…PMINIYSEEI (108 aa)). Residues 185–186 (LL), 210–211 (YF), Arg267, Gly289, and Gln298 contribute to the ATP site.

The protein belongs to the ThiI family.

It localises to the cytoplasm. The catalysed reaction is [ThiI sulfur-carrier protein]-S-sulfanyl-L-cysteine + a uridine in tRNA + 2 reduced [2Fe-2S]-[ferredoxin] + ATP + H(+) = [ThiI sulfur-carrier protein]-L-cysteine + a 4-thiouridine in tRNA + 2 oxidized [2Fe-2S]-[ferredoxin] + AMP + diphosphate. It carries out the reaction [ThiS sulfur-carrier protein]-C-terminal Gly-Gly-AMP + S-sulfanyl-L-cysteinyl-[cysteine desulfurase] + AH2 = [ThiS sulfur-carrier protein]-C-terminal-Gly-aminoethanethioate + L-cysteinyl-[cysteine desulfurase] + A + AMP + 2 H(+). Its pathway is cofactor biosynthesis; thiamine diphosphate biosynthesis. Catalyzes the ATP-dependent transfer of a sulfur to tRNA to produce 4-thiouridine in position 8 of tRNAs, which functions as a near-UV photosensor. Also catalyzes the transfer of sulfur to the sulfur carrier protein ThiS, forming ThiS-thiocarboxylate. This is a step in the synthesis of thiazole, in the thiamine biosynthesis pathway. The sulfur is donated as persulfide by IscS. This Agathobacter rectalis (strain ATCC 33656 / DSM 3377 / JCM 17463 / KCTC 5835 / VPI 0990) (Eubacterium rectale) protein is Probable tRNA sulfurtransferase.